Reading from the N-terminus, the 369-residue chain is Protein-glutamate methylesterase/protein-glutamine glutaminase 1 (369 aa).

A Response regulatory domain is found at 3 to 120; that stretch reads KVVVVDDSAF…SLDIVKIEKD (118 aa). 4-aspartylphosphate is present on Asp54. Residues 136–168 are compositionally biased toward low complexity; sequence RSFRPAPAVRPAAPAALRATPRPSAAPSSAASS. The disordered stretch occupies residues 136-174; the sequence is RSFRPAPAVRPAAPAALRATPRPSAAPSSAASSTGTLQV. One can recognise a CheB-type methylesterase domain in the interval 177-369; that stretch reads GKPVRDVVAI…AQAIMNAVYK (193 aa). Active-site residues include Ser189, His216, and Asp312.

This sequence belongs to the CheB family. Phosphorylated by CheA. Phosphorylation of the N-terminal regulatory domain activates the methylesterase activity.

The protein resides in the cytoplasm. It carries out the reaction [protein]-L-glutamate 5-O-methyl ester + H2O = L-glutamyl-[protein] + methanol + H(+). It catalyses the reaction L-glutaminyl-[protein] + H2O = L-glutamyl-[protein] + NH4(+). Involved in chemotaxis. Part of a chemotaxis signal transduction system that modulates chemotaxis in response to various stimuli. Catalyzes the demethylation of specific methylglutamate residues introduced into the chemoreceptors (methyl-accepting chemotaxis proteins or MCP) by CheR. Also mediates the irreversible deamidation of specific glutamine residues to glutamic acid. The chain is Protein-glutamate methylesterase/protein-glutamine glutaminase 1 from Oleidesulfovibrio alaskensis (strain ATCC BAA-1058 / DSM 17464 / G20) (Desulfovibrio alaskensis).